Here is a 714-residue protein sequence, read N- to C-terminus: DNA ligase (714 aa).

NAD(+)-binding positions include 40–44 (DADYD), 90–91 (SL), and Glu-124. Lys-126 (N6-AMP-lysine intermediate) is an active-site residue. Arg-147, Glu-183, Lys-304, and Lys-328 together coordinate NAD(+). Residues Cys-420, Cys-423, Cys-438, and Cys-444 each coordinate Zn(2+). Positions 634–714 (TRDSEVSGKT…EWAAIVAAAG (81 aa)) constitute a BRCT domain.

The protein belongs to the NAD-dependent DNA ligase family. LigA subfamily. It depends on Mg(2+) as a cofactor. Mn(2+) is required as a cofactor.

It catalyses the reaction NAD(+) + (deoxyribonucleotide)n-3'-hydroxyl + 5'-phospho-(deoxyribonucleotide)m = (deoxyribonucleotide)n+m + AMP + beta-nicotinamide D-nucleotide.. DNA ligase that catalyzes the formation of phosphodiester linkages between 5'-phosphoryl and 3'-hydroxyl groups in double-stranded DNA using NAD as a coenzyme and as the energy source for the reaction. It is essential for DNA replication and repair of damaged DNA. The protein is DNA ligase of Sphingopyxis alaskensis (strain DSM 13593 / LMG 18877 / RB2256) (Sphingomonas alaskensis).